The sequence spans 247 residues: 2,3-bisphosphoglycerate-dependent phosphoglycerate mutase (247 aa).

Substrate is bound by residues 8 to 15 (RHGESQWN), 21 to 22 (TG), R60, 87 to 90 (ERHY), K98, 114 to 115 (RR), and 183 to 184 (GN). H9 functions as the Tele-phosphohistidine intermediate in the catalytic mechanism. The active-site Proton donor/acceptor is E87.

The protein belongs to the phosphoglycerate mutase family. BPG-dependent PGAM subfamily.

The enzyme catalyses (2R)-2-phosphoglycerate = (2R)-3-phosphoglycerate. It participates in carbohydrate degradation; glycolysis; pyruvate from D-glyceraldehyde 3-phosphate: step 3/5. Catalyzes the interconversion of 2-phosphoglycerate and 3-phosphoglycerate. The polypeptide is 2,3-bisphosphoglycerate-dependent phosphoglycerate mutase (Chlorobaculum parvum (strain DSM 263 / NCIMB 8327) (Chlorobium vibrioforme subsp. thiosulfatophilum)).